The following is a 77-amino-acid chain: DNA-directed RNA polymerase subunit Rpo5 (77 aa).

It belongs to the archaeal Rpo5/eukaryotic RPB5 RNA polymerase subunit family. Part of the RNA polymerase complex.

The protein localises to the cytoplasm. The catalysed reaction is RNA(n) + a ribonucleoside 5'-triphosphate = RNA(n+1) + diphosphate. Functionally, DNA-dependent RNA polymerase (RNAP) catalyzes the transcription of DNA into RNA using the four ribonucleoside triphosphates as substrates. The polypeptide is DNA-directed RNA polymerase subunit Rpo5 (Methanothermobacter thermautotrophicus (strain ATCC 29096 / DSM 1053 / JCM 10044 / NBRC 100330 / Delta H) (Methanobacterium thermoautotrophicum)).